Reading from the N-terminus, the 776-residue chain is K(+) efflux antiporter 3, chloroplastic (776 aa).

The N-terminal 72 residues, 1–72, are a transit peptide targeting the chloroplast; the sequence is MAISTMLGSI…KVFLDTSKRF (72 aa). Residues 73 to 93 are Lumenal, thylakoid-facing; the sequence is YFQGRWSESSGRRVETYAGVD. A helical membrane pass occupies residues 94-114; that stretch reads VASAVDVINDLGFDTLTFLMV. Residue threonine 115 is a topological domain, stromal. A helical membrane pass occupies residues 116–136; that stretch reads VIIVPAFRILKASPILGFFFA. At 137–153 the chain is on the lumenal, thylakoid side; it reads GVVLNQFGLIRNLTDVK. The helical transmembrane segment at 154-174 threads the bilayer; it reads VLSEWGILFLLFEMGLELSLA. Residues 175-181 are Stromal-facing; the sequence is RLKALAK. A helical membrane pass occupies residues 182-202; sequence FAFGMGLTQVLLCTAAFTAFE. At 203–232 the chain is on the lumenal, thylakoid side; the sequence is LPPNGAIGTKILEFLFHSRPDLVNIRSIDE. A helical transmembrane segment spans residues 233–253; that stretch reads AVVIGAALSLSSSAFVLQLLA. Residues 254-266 are Stromal-facing; that stretch reads EKGELPTRFGSAT. A helical membrane pass occupies residues 267 to 287; it reads LGILLLQDIAVVPLLVILPVL. Over 288–296 the chain is Lumenal, thylakoid; it reads ESQDIGGES. A helical transmembrane segment spans residues 297-317; that stretch reads IWPMLAKESAKALGGLGILSL. The Stromal segment spans residues 318–338; it reads GGKFFLRRIFEVVAETRSSEA. A helical transmembrane segment spans residues 339 to 359; it reads FVALCLLTVAGTSLVTQWLGF. Residues 360–389 lie on the Lumenal, thylakoid side of the membrane; sequence SDTLGAFLAGALLAETNFRTQIEADIRPFR. The helical transmembrane segment at 390-410 threads the bilayer; it reads GLLLGLFFVTTGTSIDMEVLF. The Stromal portion of the chain corresponds to 411–415; it reads REWPN. The chain crosses the membrane as a helical span at residues 416-436; that stretch reads VLSLLGGLIVIKTLIITAIGP. At 437 to 445 the chain is on the lumenal, thylakoid side; the sequence is RVGLTIQES. The chain crosses the membrane as a helical span at residues 446 to 466; that stretch reads VRVGFLLSQGGEFAFVVFSLA. The Stromal portion of the chain corresponds to 467-468; sequence NR. Residues 469–489 traverse the membrane as a helical segment; the sequence is LGVLPNELNKLLIIVVVLSMA. Topologically, residues 490 to 526 are lumenal, thylakoid; that stretch reads LTPYLNQLGRKAADFLDERLDPGEKIGEDVNFDVSES. The RCK N-terminal domain maps to 524-649; the sequence is SESIVIIGFG…KKAGATDAIL (126 aa). A helical membrane pass occupies residues 527 to 547; that stretch reads IVIIGFGQMGQVLANFLSTPL. Residues 548–776 are Stromal-facing; sequence VSDSDLVGWP…FVGKADKAQD (229 aa). Positions 728-776 are disordered; it reads MQMKASDSNSDSAAEILQETAGLSQPPEIDDSSVNIDNGFVGKADKAQD.

It belongs to the monovalent cation:proton antiporter 2 (CPA2) transporter (TC 2.A.37) family. KEA (TC 2.A.37.1) subfamily. In terms of tissue distribution, expressed at low levels in flowers, siliques and leaves. Expressed at low levels in flowers and leaves. As to expression, most abundant splice form in all organs, including siliques, flowers, leaves and roots. Preferentially expressed in photosynthetically active tissues, including seedling cotyledons and mature leaves. In terms of tissue distribution, expressed in shoots and roots.

It localises to the plastid. Its subcellular location is the chloroplast membrane. The protein localises to the golgi apparatus membrane. The protein resides in the chloroplast thylakoid membrane. It catalyses the reaction K(+)(in) + H(+)(out) = K(+)(out) + H(+)(in). With respect to regulation, regulated by a mechanism involving lumenal C-terminus region; a fine-tuned balance between photoprotective energy dissipation in high light and a maximum quantum yield in low light involves a reduced activity under high light. Functionally, electroneutral K(+)/H(+) efflux antiporter assuring proton efflux from the thylakoid lumen to the plastid stroma, thus increasing the membrane potential at the expense of the proton gradient (delta pH) component of the proton motive force (PMF). Promotes photosynthesis and growth in conditions where the chloroplast (cp)ATP synthase activity is low (e.g. cgl160 mutant background) by reducing the pH gradient across the thylakoid membrane. Accelerates photosynthetic acclimation in fluctuating light environments by modulating two components of the proton motive force, the proton gradient and the electric potential (delta Psi). Promotes the relaxation of photoprotective energy-dependent non-photochemical quenching (NPQ) after transitions from high to low light, thus enhancing photosystem II (PSII) quantum efficiency in fluctuating light. On transition from high to low light, slows down photoprotection by dissipating the pH gradient across the thylakoid membrane. During photosynthetic response on transition from dark to low light, involved in a sequential mechanism of adaptation; VCCN1 and CLCe first trigger the activation of photoprotection, which is later down-regulated by KEA3 to a low steady state, while adjusting electron transport. Together with the chloroplast NADH dehydrogenase-like (NDH) complex, maximizes photosynthesis efficiency after a long dark adaptation. Required in roots for rapid hyperosmotic-induced Ca(2+) responses and for osmo-sensory potentiation in hyperosmotic conditions. Low K(+)/H(+) efflux antiporter activity. Its function is as follows. Low K(+)/H(+) efflux antiporter activity. Promotes non-photochemical quenching (NPQ) in high light conditions. The sequence is that of K(+) efflux antiporter 3, chloroplastic from Arabidopsis thaliana (Mouse-ear cress).